A 635-amino-acid chain; its full sequence is Extracellular metalloproteinase 1 (635 aa).

Residues methionine 1–alanine 19 form the signal peptide. Positions histidine 20 to histidine 246 are excised as a propeptide. N-linked (GlcNAc...) asparagine glycosylation occurs at asparagine 287. Histidine 430 is a Zn(2+) binding site. The active site involves glutamate 431. Histidine 434 contributes to the Zn(2+) binding site. Residues asparagine 475, asparagine 594, and asparagine 623 are each glycosylated (N-linked (GlcNAc...) asparagine).

The protein belongs to the peptidase M36 family. Requires Zn(2+) as cofactor.

The protein localises to the secreted. In terms of biological role, secreted metalloproteinase probably acting as a virulence factor. The protein is Extracellular metalloproteinase 1 (MEP1) of Trichophyton tonsurans (Scalp ringworm fungus).